A 1006-amino-acid polypeptide reads, in one-letter code: Phosphatidylinositol 4,5-bisphosphate 5-phosphatase A (1006 aa).

The disordered stretch occupies residues 1–416 (MEGQSSRGSR…SSSPWSAQPT (416 aa)). The span at 27 to 41 (VAQTGAPSKVDSSFQ) shows a compositional bias: polar residues. R56 is subject to Asymmetric dimethylarginine; alternate. R56 carries the post-translational modification Omega-N-methylarginine; alternate. Residue R65 is modified to Omega-N-methylarginine. R76 bears the Asymmetric dimethylarginine mark. The residue at position 83 (R83) is an Asymmetric dimethylarginine; alternate. Omega-N-methylarginine; alternate is present on R83. Polar residues predominate over residues 94–112 (GQKTATAHRSSSLAPTSVG). An RSXSXX motif 1 motif is present at residues 102 to 107 (RSSSLA). Residues 180–193 (LAASGLSLALASEE) are compositionally biased toward low complexity. Residues 196–209 (PELPSTPSPVPSPV) are compositionally biased toward pro residues. Residues 210–234 (LSPTQEQALAPASTASGAASVGQTS) are compositionally biased toward low complexity. Residues 256 to 273 (PAQTSGPTGSPPCIQTSP) show a composition bias toward polar residues. Phosphoserine occurs at positions 291 and 324. Residues 337-347 (VPPPLPKPPRS) show a composition bias toward pro residues. Residues 345–350 (PRSPSR) carry the SH3-binding motif. Composition is skewed to low complexity over residues 348–360 (PSRSPSHSPNRSP) and 398–409 (TTSSSTSTLSSS). The RSXSXX motif 2 signature appears at 350-355 (RSPSHS). The tract at residues 425–728 (ITVVTWNVGT…SDHKPVAAQF (304 aa)) is catalytic. The segment at 729 to 840 (LLQFAFRDDM…IGITEPFQIS (112 aa)) is required for ruffle localization. The segment covering 844–858 (SELASSSTDSSGTSS) has biased composition (low complexity). Residues 844-1006 (SELASSSTDS…RGLEEGGLGP (163 aa)) form a disordered region. 2 short sequence motifs (RSXSXX motif) span residues 874–879 (RSPSPG) and 885–890 (RSRSPG). The residue at position 903 (S903) is a Phosphoserine. An RSXSXX motif 5 motif is present at residues 911–916 (RSPSPQ). Residues 927-946 (RSSNGSSRGSSEEGPSGLPG) are compositionally biased toward low complexity. S990 is modified (phosphoserine).

It belongs to the inositol 1,4,5-trisphosphate 5-phosphatase type II family.

The protein resides in the cytoplasm. The catalysed reaction is 1D-myo-inositol 1,4,5-trisphosphate + H2O = 1D-myo-inositol 1,4-bisphosphate + phosphate. It catalyses the reaction 1D-myo-inositol 1,3,4,5-tetrakisphosphate + H2O = 1D-myo-inositol 1,3,4-trisphosphate + phosphate. The enzyme catalyses a 1,2-diacyl-sn-glycero-3-phospho-(1D-myo-inositol-4,5-bisphosphate) + H2O = a 1,2-diacyl-sn-glycero-3-phospho-(1D-myo-inositol 4-phosphate) + phosphate. Functionally, inositol 5-phosphatase, which converts inositol 1,4,5-trisphosphate to inositol 1,4-bisphosphate. Also converts phosphatidylinositol 4,5-bisphosphate to phosphatidylinositol 4-phosphate and inositol 1,3,4,5-tetrakisphosphate to inositol 1,3,4-trisphosphate in vitro. May be involved in modulation of the function of inositol and phosphatidylinositol polyphosphate-binding proteins that are present at membranes ruffles. This chain is Phosphatidylinositol 4,5-bisphosphate 5-phosphatase A (INPP5J), found in Homo sapiens (Human).